Consider the following 230-residue polypeptide: Ribose-5-phosphate isomerase A (230 aa).

Substrate contacts are provided by residues 31-34 (TGST), 88-91 (DGSD), and 101-104 (KGGG). Glu110 functions as the Proton acceptor in the catalytic mechanism. Lys128 provides a ligand contact to substrate.

This sequence belongs to the ribose 5-phosphate isomerase family. In terms of assembly, homodimer.

It carries out the reaction aldehydo-D-ribose 5-phosphate = D-ribulose 5-phosphate. The protein operates within carbohydrate degradation; pentose phosphate pathway; D-ribose 5-phosphate from D-ribulose 5-phosphate (non-oxidative stage): step 1/1. In terms of biological role, catalyzes the reversible conversion of ribose-5-phosphate to ribulose 5-phosphate. The protein is Ribose-5-phosphate isomerase A of Lactobacillus helveticus (strain DPC 4571).